The chain runs to 299 residues: dTDP-4-dehydrorhamnose reductase (299 aa).

Residues 10 to 12, D30, 39 to 40, and 63 to 65 each bind NADH; these read GQV, DF, and AHT. 11–12 is a binding site for NADPH; that stretch reads QV. Residues 39 to 40, 63 to 65, and Y102 contribute to the NADPH site; these read DF and AHT. 104 to 105 contributes to the dTDP-beta-L-rhamnose binding site; the sequence is TD. Residues Y128 and K132 each coordinate NADH. NADPH contacts are provided by Y128 and K132. The Proton donor/acceptor role is filled by Y128. A dTDP-beta-L-rhamnose-binding site is contributed by W153.

It belongs to the dTDP-4-dehydrorhamnose reductase family. In terms of assembly, homodimer. Mg(2+) is required as a cofactor.

The enzyme catalyses dTDP-beta-L-rhamnose + NADP(+) = dTDP-4-dehydro-beta-L-rhamnose + NADPH + H(+). The protein operates within carbohydrate biosynthesis; dTDP-L-rhamnose biosynthesis. Its pathway is bacterial outer membrane biogenesis; LPS O-antigen biosynthesis. In terms of biological role, involved in the biosynthesis of the dTDP-L-rhamnose which is an important component of lipopolysaccharide (LPS). Catalyzes the reduction of dTDP-6-deoxy-L-lyxo-4-hexulose to yield dTDP-L-rhamnose. RmlD uses NADH and NADPH nearly equally well. The sequence is that of dTDP-4-dehydrorhamnose reductase from Shigella flexneri.